The sequence spans 475 residues: Sulfate adenylyltransferase subunit 1 (475 aa).

Residues 25-240 enclose the tr-type G domain; the sequence is KSLLRFLTCG…VLETVEVINL (216 aa). A G1 region spans residues 34–41; sequence GSVDDGKS. Position 34–41 (34–41) interacts with GTP; it reads GSVDDGKS. The G2 stretch occupies residues 92-96; it reads GITID. The tract at residues 113 to 116 is G3; the sequence is DTPG. Residues 113 to 117 and 168 to 171 each bind GTP; these read DTPGH and NKMD. A G4 region spans residues 168-171; sequence NKMD. Residues 206–208 are G5; that stretch reads SAL.

It belongs to the TRAFAC class translation factor GTPase superfamily. Classic translation factor GTPase family. CysN/NodQ subfamily. As to quaternary structure, heterodimer composed of CysD, the smaller subunit, and CysN.

It carries out the reaction sulfate + ATP + H(+) = adenosine 5'-phosphosulfate + diphosphate. It functions in the pathway sulfur metabolism; hydrogen sulfide biosynthesis; sulfite from sulfate: step 1/3. Its function is as follows. With CysD forms the ATP sulfurylase (ATPS) that catalyzes the adenylation of sulfate producing adenosine 5'-phosphosulfate (APS) and diphosphate, the first enzymatic step in sulfur assimilation pathway. APS synthesis involves the formation of a high-energy phosphoric-sulfuric acid anhydride bond driven by GTP hydrolysis by CysN coupled to ATP hydrolysis by CysD. This chain is Sulfate adenylyltransferase subunit 1, found in Sodalis glossinidius (strain morsitans).